We begin with the raw amino-acid sequence, 211 residues long: Type II secretion system protein J (211 aa).

Positions 1–7 (MRPRAAG) are cleaved as a propeptide — leader sequence. Residue F8 is modified to N-methylphenylalanine. Residues 8-28 (FTLIEVLLATMLLVGGLALAF) traverse the membrane as a helical segment.

It belongs to the GSP J family.

It is found in the membrane. Its function is as follows. Involved in a type II secretion system (T2SS, formerly general secretion pathway, GSP) for the export of proteins. This is Type II secretion system protein J (xpsJ) from Xanthomonas campestris pv. campestris (strain ATCC 33913 / DSM 3586 / NCPPB 528 / LMG 568 / P 25).